The sequence spans 120 residues: Late histone H2A.2.2 (120 aa).

The segment covering 1–18 has biased composition (basic residues); sequence MSGRGKGAKSKSKAKSRS. Residues 1–22 are disordered; it reads MSGRGKGAKSKSKAKSRSSRAG. At Ser-2 the chain carries N-acetylserine. Phosphoserine is present on Ser-2. Gln-104 bears the N5-methylglutamine mark. Lys-119 is covalently cross-linked (Glycyl lysine isopeptide (Lys-Gly) (interchain with G-Cter in ubiquitin)).

It belongs to the histone H2A family. In terms of assembly, the nucleosome is a histone octamer containing two molecules each of H2A, H2B, H3 and H4 assembled in one H3-H4 heterotetramer and two H2A-H2B heterodimers. The octamer wraps approximately 147 bp of DNA. In terms of processing, monoubiquitination of Lys-119 gives a specific tag for epigenetic transcriptional repression. Post-translationally, phosphorylation of Ser-2 directly represses transcription.

It localises to the nucleus. The protein resides in the chromosome. In terms of biological role, core component of nucleosome. Nucleosomes wrap and compact DNA into chromatin, limiting DNA accessibility to the cellular machineries which require DNA as a template. Histones thereby play a central role in transcription regulation, DNA repair, DNA replication and chromosomal stability. DNA accessibility is regulated via a complex set of post-translational modifications of histones, also called histone code, and nucleosome remodeling. In Psammechinus miliaris (Green sea urchin), this protein is Late histone H2A.2.2.